The chain runs to 245 residues: Myozenin-3 (245 aa).

Phosphoserine is present on Ser31. A binding to ACTN2, PPP3CA and TCAP region spans residues 50–67; it reads LLFQKRQRRVQKFTFELS. Residues 67–108 form a binding to FLNC region; sequence SESLQAILASSARGKVAGRAAQATVPNGLEEQNHHSETHVFQ. Residues 93 to 134 are disordered; it reads NGLEEQNHHSETHVFQGSPGDPGITHLGAAGTGSVRSPSALA. The binding to ACTN2 stretch occupies residues 180-201; sequence PIPRDYRNFNKTPVPFGGPHVR.

This sequence belongs to the myozenin family. As to quaternary structure, interacts with ACTN2, LDB3, FLNC, PPP3CA and TCAP. Expressed specifically in skeletal muscle and is enriched in fast-twitch muscle fibers. Not detected in heart.

It localises to the cytoplasm. The protein localises to the myofibril. Its subcellular location is the sarcomere. The protein resides in the z line. Its function is as follows. Myozenins may serve as intracellular binding proteins involved in linking Z line proteins such as alpha-actinin, gamma-filamin, TCAP/telethonin, LDB3/ZASP and localizing calcineurin signaling to the sarcomere. Plays an important role in the modulation of calcineurin signaling. May play a role in myofibrillogenesis. The polypeptide is Myozenin-3 (Mus musculus (Mouse)).